The chain runs to 415 residues: Histidine--tRNA ligase (415 aa).

Belongs to the class-II aminoacyl-tRNA synthetase family. As to quaternary structure, homodimer.

Its subcellular location is the cytoplasm. The enzyme catalyses tRNA(His) + L-histidine + ATP = L-histidyl-tRNA(His) + AMP + diphosphate + H(+). This Rickettsia canadensis (strain McKiel) protein is Histidine--tRNA ligase.